A 456-amino-acid chain; its full sequence is Exodeoxyribonuclease 7 large subunit (456 aa).

It belongs to the XseA family. In terms of assembly, heterooligomer composed of large and small subunits.

It localises to the cytoplasm. It carries out the reaction Exonucleolytic cleavage in either 5'- to 3'- or 3'- to 5'-direction to yield nucleoside 5'-phosphates.. In terms of biological role, bidirectionally degrades single-stranded DNA into large acid-insoluble oligonucleotides, which are then degraded further into small acid-soluble oligonucleotides. This Lactobacillus gasseri (strain ATCC 33323 / DSM 20243 / BCRC 14619 / CIP 102991 / JCM 1131 / KCTC 3163 / NCIMB 11718 / NCTC 13722 / AM63) protein is Exodeoxyribonuclease 7 large subunit.